We begin with the raw amino-acid sequence, 515 residues long: Protein nucleotidyltransferase YdiU (515 aa).

The ATP site is built by glycine 101, glycine 103, arginine 104, lysine 124, aspartate 136, glycine 137, arginine 194, and arginine 201. The Proton acceptor role is filled by aspartate 269. Residues asparagine 270 and aspartate 279 each contribute to the Mg(2+) site. Aspartate 279 provides a ligand contact to ATP.

This sequence belongs to the SELO family. The cofactor is Mg(2+). Requires Mn(2+) as cofactor.

It carries out the reaction L-seryl-[protein] + ATP = 3-O-(5'-adenylyl)-L-seryl-[protein] + diphosphate. The catalysed reaction is L-threonyl-[protein] + ATP = 3-O-(5'-adenylyl)-L-threonyl-[protein] + diphosphate. The enzyme catalyses L-tyrosyl-[protein] + ATP = O-(5'-adenylyl)-L-tyrosyl-[protein] + diphosphate. It catalyses the reaction L-histidyl-[protein] + UTP = N(tele)-(5'-uridylyl)-L-histidyl-[protein] + diphosphate. It carries out the reaction L-seryl-[protein] + UTP = O-(5'-uridylyl)-L-seryl-[protein] + diphosphate. The catalysed reaction is L-tyrosyl-[protein] + UTP = O-(5'-uridylyl)-L-tyrosyl-[protein] + diphosphate. Functionally, nucleotidyltransferase involved in the post-translational modification of proteins. It can catalyze the addition of adenosine monophosphate (AMP) or uridine monophosphate (UMP) to a protein, resulting in modifications known as AMPylation and UMPylation. The polypeptide is Protein nucleotidyltransferase YdiU (Cytophaga hutchinsonii (strain ATCC 33406 / DSM 1761 / CIP 103989 / NBRC 15051 / NCIMB 9469 / D465)).